We begin with the raw amino-acid sequence, 262 residues long: tRNA pseudouridine synthase A (262 aa).

Asp-51 acts as the Nucleophile in catalysis. Substrate is bound at residue Tyr-109.

Belongs to the tRNA pseudouridine synthase TruA family. As to quaternary structure, homodimer.

It carries out the reaction uridine(38/39/40) in tRNA = pseudouridine(38/39/40) in tRNA. Functionally, formation of pseudouridine at positions 38, 39 and 40 in the anticodon stem and loop of transfer RNAs. The polypeptide is tRNA pseudouridine synthase A (Legionella pneumophila (strain Paris)).